The sequence spans 97 residues: Large ribosomal subunit protein bL28 (97 aa).

Belongs to the bacterial ribosomal protein bL28 family.

The polypeptide is Large ribosomal subunit protein bL28 (Bartonella henselae (strain ATCC 49882 / DSM 28221 / CCUG 30454 / Houston 1) (Rochalimaea henselae)).